A 389-amino-acid chain; its full sequence is Large envelope protein (389 aa).

The residue at position 1 (M1) is an N-acetylmethionine. The N-myristoyl glycine; by host moiety is linked to residue G2. Residues 2 to 108 (GQNLSTSNPL…PPLRDTHPQA (107 aa)) form a pre-S1 region. Positions 2–163 (GQNLSTSNPL…FSRTGDPAPN (162 aa)) are pre-S. The Virion surface; in external conformation segment spans residues 2-170 (GQNLSTSNPL…APNMESITSG (169 aa)). Topologically, residues 2–242 (GQNLSTSNPL…PGYRWMCLRR (241 aa)) are intravirion; in internal conformation. The segment at 73-99 (IITTVPANPPPASTNRQSGRKPTPISP) is disordered. Positions 109–163 (MHWNSTTFHQALQDPRVRGLYFPAGGSSSGTAYPVPDTASHISSIFSRTGDPAPN) are pre-S2. A helical transmembrane segment spans residues 171-191 (FLGPLLVLQAGFFLLTKILTI). Residues 192–242 (PQSLDSWWTSLNFLGGAPVCLGQNSQSPTSNHSPTSCPPICPGYRWMCLRR) lie on the Intravirion; in external conformation side of the membrane. The helical transmembrane segment at 243 to 263 (FIIFLFILLLCLIFLLVLLDY) threads the bilayer. The Virion surface portion of the chain corresponds to 264–337 (QGMLPVCPLI…WASVRFSWLS (74 aa)). N-linked (GlcNAc...) asparagine; by host glycosylation is present at N309. The helical transmembrane segment at 338–358 (LLAPFVQWFAGLSPTVWLSVI) threads the bilayer. The Intravirion segment spans residues 359–364 (WMMWYW). The chain crosses the membrane as a helical span at residues 365-387 (GPNLYNILSPFIPLLPIFFCLWV). Topologically, residues 388 to 389 (YI) are virion surface.

Belongs to the orthohepadnavirus major surface antigen family. In terms of assembly, in its internal form (Li-HBsAg), interacts with the capsid protein and with the isoform S. Interacts with host chaperone CANX. As to quaternary structure, associates with host chaperone CANX through its pre-S2 N glycan; this association may be essential for isoform M proper secretion. Interacts with isoform L. Interacts with the antigens of satellite virus HDV (HDVAgs); this interaction is required for encapsidation of HDV genomic RNA. Post-translationally, isoform M is N-terminally acetylated by host at a ratio of 90%, and N-glycosylated by host at the pre-S2 region. Myristoylated.

It is found in the virion membrane. Functionally, the large envelope protein exists in two topological conformations, one which is termed 'external' or Le-HBsAg and the other 'internal' or Li-HBsAg. In its external conformation the protein attaches the virus to cell receptors and thereby initiating infection. This interaction determines the species specificity and liver tropism. This attachment induces virion internalization predominantly through caveolin-mediated endocytosis. The large envelope protein also assures fusion between virion membrane and endosomal membrane. In its internal conformation the protein plays a role in virion morphogenesis and mediates the contact with the nucleocapsid like a matrix protein. In terms of biological role, the middle envelope protein plays an important role in the budding of the virion. It is involved in the induction of budding in a nucleocapsid independent way. In this process the majority of envelope proteins bud to form subviral lipoprotein particles of 22 nm of diameter that do not contain a nucleocapsid. This chain is Large envelope protein, found in Gorilla gorilla (western gorilla).